The following is a 527-amino-acid chain: MAMRFFQLHRNRLVKGNSGKALSFSRLLDLSFWVRAFCNYREILRNGLHSLQFNEALDLFTHMVESRPLPSIIDFTKLLNVIAKMKKFDVVINLCDHLQIMGVSHDLYTCNLLMNCFCQSSQPYLASSFLGKMMKLGFEPDIVTFTSLINGFCLGNRMEEAMSMVNQMVEMGIKPDVVMYTTIIDSLCKNGHVNYALSLFDQMENYGIRPDVVMYTSLVNGLCNSGRWRDADSLLRGMTKRKIKPDVITFNALIDAFVKEGKFLDAEELYNEMIRMSIAPNIFTYTSLINGFCMEGCVDEARQMFYLMETKGCFPDVVAYTSLINGFCKCKKVDDAMKIFYEMSQKGLTGNTITYTTLIQGFGQVGKPNVAQEVFSHMVSRGVPPNIRTYNVLLHCLCYNGKVKKALMIFEDMQKREMDGVAPNIWTYNVLLHGLCYNGKLEKALMVFEDMRKREMDIGIITYTIIIQGMCKAGKVKNAVNLFCSLPSKGVKPNVVTYTTMISGLFREGLKHEAHVLFRKMKEDGVS.

The N-terminal 35 residues, 1 to 35 (MAMRFFQLHRNRLVKGNSGKALSFSRLLDLSFWVR), are a transit peptide targeting the mitochondrion. PPR repeat units lie at residues 36 to 70 (AFCN…RPLP), 71 to 105 (SIID…GVSH), 106 to 140 (DLYT…GFEP), 141 to 175 (DIVT…GIKP), 176 to 210 (DVVM…GIRP), 211 to 245 (DVVM…KIKP), 246 to 280 (DVIT…SIAP), 281 to 315 (NIFT…GCFP), 316 to 350 (DVVA…GLTG), 351 to 385 (NTIT…GVPP), 386 to 420 (NIRT…EMDG), 424 to 458 (NIWT…EMDI), 459 to 493 (GIIT…GVKP), and 494 to 527 (NVVT…DGVS).

The protein belongs to the PPR family. P subfamily.

The protein resides in the mitochondrion. This Arabidopsis thaliana (Mouse-ear cress) protein is Pentatricopeptide repeat-containing protein At5g41170, mitochondrial.